The sequence spans 428 residues: Flotillin-2 (428 aa).

Gly-2 is lipidated: N-myristoyl glycine. Cys-4 is lipidated: S-palmitoyl cysteine; by ZDHHC5. The S-palmitoyl cysteine moiety is linked to residue Cys-19. A lipid anchor (S-palmitoyl cysteine; by ZDHHC5) is attached at Cys-20. Ser-405 is subject to Phosphoserine.

The protein belongs to the band 7/mec-2 family. Flotillin subfamily. Heterooligomeric complex of flotillin-1 and flotillin-2 and caveolin-1 and caveolin-2. Interacts with ECPAS. ZDHHC5-catalyzed palmitoylation may be required for the formation of higher-order complexes and for neurite outgrowth in cultured neural stem cells. As to expression, expressed in many tissues, including suprabasal epidermis, hair follicles, heart, lung, thymus, spleen, liver, kidney and brain. Not expressed in skeletal muscle.

The protein localises to the cell membrane. Its subcellular location is the membrane. It localises to the caveola. It is found in the endosome. May act as a scaffolding protein within caveolar membranes, functionally participating in formation of caveolae or caveolae-like vesicles. May be involved in epidermal cell adhesion and epidermal structure and function. This Mus musculus (Mouse) protein is Flotillin-2 (Flot2).